The sequence spans 349 residues: MVRAKRKLDHIEYALSTGQSRTHGFHDIDFVHQSLPNSNYDTITCETKIGELSLSSPIFINAMTGGGGEKTLHINEQLAYVAKHHNLAMAVGSQMAALKDESEAASYKIIRKVNPNGIFFANLGSEATIEQAERAVDMIEANALQIHLNVIQELTMPEGDRDFTGVLRRIEKIVLNSKVPVIVKEVGFGMSKETMQQLASIGVTAIDIGGQGGTNFAAVENERRQRMLSYFNNWGIQTATSIVEATSTNNNLSFIASGGIQTALDVAKAIALGANTTAFAGYFLRILMQDGIEKLVDEIDLLHTDLKFIMTALGAKTIEELQSVPLVVKGETYHWLTQRGIDTTHYSRR.

Residue 6–7 participates in substrate binding; the sequence is RK. FMN is bound by residues 62-64, S93, and N122; that span reads AMT. Residue Q152 participates in substrate binding. Residue E153 participates in Mg(2+) binding. FMN-binding positions include K184, T214, 258–259, and 280–281; these read GG and AG.

The protein belongs to the IPP isomerase type 2 family. As to quaternary structure, homooctamer. Dimer of tetramers. The cofactor is FMN. Requires NADPH as cofactor. Mg(2+) is required as a cofactor.

Its subcellular location is the cytoplasm. It carries out the reaction isopentenyl diphosphate = dimethylallyl diphosphate. Functionally, involved in the biosynthesis of isoprenoids. Catalyzes the 1,3-allylic rearrangement of the homoallylic substrate isopentenyl (IPP) to its allylic isomer, dimethylallyl diphosphate (DMAPP). This Bacillus cereus (strain ATCC 10987 / NRS 248) protein is Isopentenyl-diphosphate delta-isomerase.